The following is a 450-amino-acid chain: C4-dicarboxylate transport protein (450 aa).

A run of 9 helical transmembrane segments spans residues 10–30 (SLYFQVIVAIVIGILIGHFYP), 46–66 (LIKMVIAPIIFCTVVSGIAGM), 78–98 (YALLYFEIVSTIALLIGLIVV), 143–163 (IVGAFANGDILQVLMFSVIFG), 190–210 (IINMIMKLAPLGAFGAMAFTI), 224–244 (LMICFYITCALFVVFVLGAIA), 291–311 (VVGLVIPTGYSFNLDGTSIYL), 332–352 (ITLLLVLLLSSKGAAGVTGSG), and 354–374 (IVLAATLSAVGHLPVAGLALI). The interval 428–450 (PEDDLGVAEGPTPGAAVNTTKTV) is disordered.

This sequence belongs to the dicarboxylate/amino acid:cation symporter (DAACS) (TC 2.A.23) family.

The protein resides in the cell inner membrane. Functionally, responsible for the transport of dicarboxylates such as succinate, fumarate, and malate from the periplasm across the membrane. The chain is C4-dicarboxylate transport protein from Pseudomonas syringae pv. syringae (strain B728a).